The sequence spans 281 residues: NADPH-dependent 7-cyano-7-deazaguanine reductase (281 aa).

Residue 88–90 (VES) participates in substrate binding. Residue 90–91 (SK) participates in NADPH binding. Cysteine 189 functions as the Thioimide intermediate in the catalytic mechanism. Aspartate 196 acts as the Proton donor in catalysis. Position 228–229 (228–229 (HE)) interacts with substrate. 257-258 (RG) contacts NADPH.

It belongs to the GTP cyclohydrolase I family. QueF type 2 subfamily. As to quaternary structure, homodimer.

Its subcellular location is the cytoplasm. It carries out the reaction 7-aminomethyl-7-carbaguanine + 2 NADP(+) = 7-cyano-7-deazaguanine + 2 NADPH + 3 H(+). The protein operates within tRNA modification; tRNA-queuosine biosynthesis. Functionally, catalyzes the NADPH-dependent reduction of 7-cyano-7-deazaguanine (preQ0) to 7-aminomethyl-7-deazaguanine (preQ1). In Cronobacter sakazakii (strain ATCC BAA-894) (Enterobacter sakazakii), this protein is NADPH-dependent 7-cyano-7-deazaguanine reductase.